The chain runs to 251 residues: ATP synthase subunit a (251 aa).

The next 5 membrane-spanning stretches (helical) occupy residues 34 to 54 (VFLT…AASS), 93 to 113 (FVGT…LVPF), 130 to 150 (INTT…AGFS), 195 to 215 (LVVG…VMAL), and 216 to 236 (GLFT…AYIG).

Belongs to the ATPase A chain family. As to quaternary structure, F-type ATPases have 2 components, CF(1) - the catalytic core - and CF(0) - the membrane proton channel. CF(1) has five subunits: alpha(3), beta(3), gamma(1), delta(1), epsilon(1). CF(0) has four main subunits: a, b, b' and c.

The protein resides in the cellular thylakoid membrane. In terms of biological role, key component of the proton channel; it plays a direct role in the translocation of protons across the membrane. This Trichormus variabilis (strain ATCC 29413 / PCC 7937) (Anabaena variabilis) protein is ATP synthase subunit a.